Reading from the N-terminus, the 510-residue chain is Allene oxide synthase 2, chloroplastic (510 aa).

The N-terminal 31 residues, 1–31 (MALTLSFSLPLPSLHQKIPSKYSTFRPIIVS), are a transit peptide targeting the chloroplast. Lysine 127, histidine 158, and lysine 162 together coordinate heme b. Residues asparagine 315 and lysine 321 each coordinate (13S)-hydroperoxy-(9Z,11E)-octadecadienoate. Asparagine 315 is a binding site for (13S)-hydroperoxy-(9Z,11E,15Z)-octadecatrienoate. 2 residues coordinate heme b: lysine 463 and cysteine 465.

It belongs to the cytochrome P450 family. It depends on heme b as a cofactor. In terms of tissue distribution, expressed in flower buds, leaves, roots, stems, petioles and cotyledons. Not detected in ripe fruits. Expressed in sieve elements.

The protein localises to the plastid. Its subcellular location is the chloroplast inner membrane. It carries out the reaction (13S)-hydroperoxy-(9Z,11E,15Z)-octadecatrienoate = (9Z,13S,15Z)-12,13-epoxyoctadeca-9,11,15-trienoate + H2O. The catalysed reaction is (13S)-hydroperoxy-(9Z,11E)-octadecadienoate = (9Z,13S)-12,13-epoxyoctadeca-9,11-dienoate + H2O. Cytochrome P450 of the CYP74A subfamily involved in the biosynthesis of jasmonic acid from lipoxygenase-derived hydroperoxides of free fatty acids. Catalyzes the synthesis of unstable allene oxide, which is further converted spontaneously by hydrolysis or cyclization. Metabolizes 13- but not 9-hydroperoxides of linoleic and linolenic acids. Can use 15S-hydroperoxy-11(Z),13(E),17(Z)-eicosatrienoic acid (15-HPET) and 13S-hydroperoxy-9(Z),11(E),15(Z)-octadecatrienoic acid (13-HPOT) as substrates, but only 50% activity with 13S-hydroperoxy-9(Z),11(E)-octadecadienoic acid (13-HPOD). This chain is Allene oxide synthase 2, chloroplastic, found in Solanum lycopersicum (Tomato).